The primary structure comprises 1290 residues: DNA-directed RNA polymerase subunit beta' (1290 aa).

The Zn(2+) site is built by Cys-60, Cys-62, Cys-75, and Cys-78. Positions 535, 537, and 539 each coordinate Mg(2+). Positions 875, 953, 960, and 963 each coordinate Zn(2+).

This sequence belongs to the RNA polymerase beta' chain family. In terms of assembly, the RNAP catalytic core consists of 2 alpha, 1 beta, 1 beta' and 1 omega subunit. When a sigma factor is associated with the core the holoenzyme is formed, which can initiate transcription. Mg(2+) serves as cofactor. It depends on Zn(2+) as a cofactor.

It catalyses the reaction RNA(n) + a ribonucleoside 5'-triphosphate = RNA(n+1) + diphosphate. Functionally, DNA-dependent RNA polymerase catalyzes the transcription of DNA into RNA using the four ribonucleoside triphosphates as substrates. The polypeptide is DNA-directed RNA polymerase subunit beta' (Nocardioides sp. (strain ATCC BAA-499 / JS614)).